Here is a 443-residue protein sequence, read N- to C-terminus: Phosphoglucosamine mutase (443 aa).

Serine 101 acts as the Phosphoserine intermediate in catalysis. 4 residues coordinate Mg(2+): serine 101, aspartate 239, aspartate 241, and aspartate 243. At serine 101 the chain carries Phosphoserine.

It belongs to the phosphohexose mutase family. Mg(2+) is required as a cofactor. Post-translationally, activated by phosphorylation.

The catalysed reaction is alpha-D-glucosamine 1-phosphate = D-glucosamine 6-phosphate. Functionally, catalyzes the conversion of glucosamine-6-phosphate to glucosamine-1-phosphate. The protein is Phosphoglucosamine mutase of Francisella tularensis subsp. novicida (strain U112).